Here is a 606-residue protein sequence, read N- to C-terminus: DNA mismatch repair protein MutL (606 aa).

Positions 350–371 (GWRPSAPSAPWTPEASPSRPYQ) are disordered.

Belongs to the DNA mismatch repair MutL/HexB family.

This protein is involved in the repair of mismatches in DNA. It is required for dam-dependent methyl-directed DNA mismatch repair. May act as a 'molecular matchmaker', a protein that promotes the formation of a stable complex between two or more DNA-binding proteins in an ATP-dependent manner without itself being part of a final effector complex. This is DNA mismatch repair protein MutL from Rhizobium rhizogenes (strain K84 / ATCC BAA-868) (Agrobacterium radiobacter).